The chain runs to 175 residues: Mitochondrial inner membrane protease subunit 2 (175 aa).

The chain crosses the membrane as a helical span at residues 19–37; that stretch reads FFVAVPVAVTFLDRVACVA. Active-site residues include serine 43 and lysine 91.

The protein belongs to the peptidase S26 family. IMP2 subfamily. As to quaternary structure, heterodimer of 2 subunits, IMMPL1 and IMMPL2. Expressed in all tissues tested except adult liver and lung.

The protein resides in the mitochondrion inner membrane. Its function is as follows. Catalyzes the removal of transit peptides required for the targeting of proteins from the mitochondrial matrix, across the inner membrane, into the inter-membrane space. Known to process the nuclear encoded protein DIABLO. This chain is Mitochondrial inner membrane protease subunit 2 (IMMP2L), found in Homo sapiens (Human).